The chain runs to 148 residues: Arginine repressor (148 aa).

This sequence belongs to the ArgR family.

The protein localises to the cytoplasm. Its pathway is amino-acid biosynthesis; L-arginine biosynthesis [regulation]. In terms of biological role, regulates arginine biosynthesis genes. This is Arginine repressor from Chlorobium phaeobacteroides (strain BS1).